Consider the following 209-residue polypeptide: Large ribosomal subunit protein uL3 (209 aa).

The interval 128 to 156 (FAGGSRTHGQSDRLRAPGSVGGSSDPSRT) is disordered.

It belongs to the universal ribosomal protein uL3 family. In terms of assembly, part of the 50S ribosomal subunit. Forms a cluster with proteins L14 and L19.

One of the primary rRNA binding proteins, it binds directly near the 3'-end of the 23S rRNA, where it nucleates assembly of the 50S subunit. This is Large ribosomal subunit protein uL3 from Prosthecochloris aestuarii (strain DSM 271 / SK 413).